Reading from the N-terminus, the 258-residue chain is TLC domain-containing protein 4 A (258 aa).

Helical transmembrane passes span 8 to 28 (YLISVEPLGFILYYTSLYIWI), 49 to 71 (IEWTNKIVATISSIVSFSLSCYC), 92 to 112 (FILKFISFYFLFDALHLIIYY), 118 to 138 (WPIIIHHLVVGILSYVYIGLY), 144 to 164 (LTLLYFLLFEITNPFIHMKWF), 170 to 190 (LENHILYSINGFMMAFFFIFI), and 217 to 237 (IIFFCFPIITILNLFWTYLVI). Residues 46–245 (SSKIEWTNKI…VIKGILKHLS (200 aa)) form the TLC domain.

The protein belongs to the TLCD4 family.

Its subcellular location is the membrane. This is TLC domain-containing protein 4 A (tlcd4a) from Dictyostelium discoideum (Social amoeba).